Here is an 803-residue protein sequence, read N- to C-terminus: Volume-regulated anion channel subunit LRRC8C (803 aa).

The Cytoplasmic segment spans residues 1 to 22 (MIPVTEFRQFSEQQPAFRVLKP). Residues 23 to 43 (WWDVFTDYLSVAMLMIGVFGC) traverse the membrane as a helical segment. Topologically, residues 44–125 (TLQVMQDKII…YERALHWYAK (82 aa)) are extracellular. 2 disulfide bridges follow: Cys-54-Cys-308 and Cys-115-Cys-293. N-linked (GlcNAc...) asparagine glycans are attached at residues Asn-64 and Asn-70. The chain crosses the membrane as a helical span at residues 126 to 146 (YFPYLVLIHTLVFMLCSNFWF). Over 147–266 (KFPGSSSKIE…ILYAMYVRQT (120 aa)) the chain is Cytoplasmic. The tract at residues 177 to 211 (EVSGEDSEEKDNRKNNMNRSNTIQSGPEGSLVKSQ) is disordered. A compositionally biased stretch (polar residues) spans 191 to 211 (NNMNRSNTIQSGPEGSLVKSQ). Phosphoserine occurs at positions 212 and 215. A helical transmembrane segment spans residues 267–287 (VLKVIKFLIIIAYNSALVSKV). Over 288–320 (QFTVDCNVDIQDMTGYKNFSCNHTMAHLFSKLS) the chain is Extracellular. A helical transmembrane segment spans residues 321–341 (FCYLCFVSIYGLTCLYTLYWL). The Cytoplasmic segment spans residues 342–803 (FYRSLREYSF…SDVREQMKAD (462 aa)). 17 LRR repeats span residues 397–420 (ENKL…KLQT), 421–443 (NAHN…VFEI), 446–466 (LQSL…IAQL), 467–488 (DNLQ…ALSF), 490–513 (KENL…MYGL), 515–537 (NLEE…TLES), 541–563 (LKSL…VVDV), 565–587 (SHLQ…NLKK), 588–611 (MTNL…VFSL), 613–635 (SLQE…SFQH), 637–659 (RKLT…IKKL), 660–682 (TSLE…LFLC), 684–705 (KIRY…IGVL), 706–728 (QSLQ…LYFC), 730–751 (KLKT…IGNL), 752–774 (LFLS…LGDC), and 776–799 (ALKR…VREQ).

Belongs to the LRRC8 family. Heterohexamer; oligomerizes with other LRRC8 proteins (LRRC8A, LRRC8B, LRRC8D and/or LRRC8E) to form a heterohexamer. Homoheptamer; inactive, likely because it is not targeted to the plasma membrane in the absence of LRRC8A. In vivo, the subunit composition may depend primarily on expression levels, and heterooligomeric channels containing various proportions of the different LRRC8 proteins may coexist.

The protein resides in the cell membrane. It localises to the endoplasmic reticulum membrane. The catalysed reaction is chloride(in) = chloride(out). The enzyme catalyses iodide(out) = iodide(in). It carries out the reaction taurine(out) = taurine(in). It catalyses the reaction 2',3'-cGAMP(out) = 2',3'-cGAMP(in). Its function is as follows. Non-essential component of the volume-regulated anion channel (VRAC, also named VSOAC channel), an anion channel required to maintain a constant cell volume in response to extracellular or intracellular osmotic changes. The VRAC channel conducts iodide better than chloride and can also conduct organic osmolytes like taurine. Plays a redundant role in the efflux of amino acids, such as aspartate and glutamate, in response to osmotic stress. The VRAC channel also mediates transport of immunoreactive cyclic dinucleotide GMP-AMP (2'-3'-cGAMP), an immune messenger produced in response to DNA virus in the cytosol. Channel activity requires LRRC8A plus at least one other family member (LRRC8B, LRRC8C, LRRC8D or LRRC8E); channel characteristics depend on the precise subunit composition. This chain is Volume-regulated anion channel subunit LRRC8C, found in Rattus norvegicus (Rat).